A 193-amino-acid chain; its full sequence is Peptidyl-tRNA hydrolase (193 aa).

His-17 is a tRNA binding site. His-22 acts as the Proton acceptor in catalysis. 3 residues coordinate tRNA: Phe-68, Asn-70, and Asn-116.

The protein belongs to the PTH family. As to quaternary structure, monomer.

The protein localises to the cytoplasm. The enzyme catalyses an N-acyl-L-alpha-aminoacyl-tRNA + H2O = an N-acyl-L-amino acid + a tRNA + H(+). Its function is as follows. Hydrolyzes ribosome-free peptidyl-tRNAs (with 1 or more amino acids incorporated), which drop off the ribosome during protein synthesis, or as a result of ribosome stalling. Catalyzes the release of premature peptidyl moieties from peptidyl-tRNA molecules trapped in stalled 50S ribosomal subunits, and thus maintains levels of free tRNAs and 50S ribosomes. This chain is Peptidyl-tRNA hydrolase, found in Xanthomonas campestris pv. campestris (strain ATCC 33913 / DSM 3586 / NCPPB 528 / LMG 568 / P 25).